Consider the following 441-residue polypeptide: Glutamate--tRNA ligase 2 (441 aa).

A 'HIGH' region motif is present at residues 6-16 (PSPTGDMHIGN). A 'KMSKS' region motif is present at residues 231 to 235 (KMSKR). Lys-234 serves as a coordination point for ATP.

This sequence belongs to the class-I aminoacyl-tRNA synthetase family. Glutamate--tRNA ligase type 1 subfamily. In terms of assembly, monomer.

It localises to the cytoplasm. The catalysed reaction is tRNA(Glu) + L-glutamate + ATP = L-glutamyl-tRNA(Glu) + AMP + diphosphate. Catalyzes the attachment of glutamate to tRNA(Glu) in a two-step reaction: glutamate is first activated by ATP to form Glu-AMP and then transferred to the acceptor end of tRNA(Glu). The protein is Glutamate--tRNA ligase 2 of Helicobacter hepaticus (strain ATCC 51449 / 3B1).